Here is a 369-residue protein sequence, read N- to C-terminus: Phospho-N-acetylmuramoyl-pentapeptide-transferase (369 aa).

10 helical membrane-spanning segments follow: residues 30 to 50 (LAIF…IRWM), 74 to 94 (GTPT…TLLW), 97 to 117 (LSNP…LLGF), 136 to 156 (IRLA…IVFA), 177 to 197 (YFVD…VGAA), 208 to 228 (GLAT…AYLV), 244 to 264 (GVGE…GFLW), 272 to 292 (IFMG…VAVA), 297 to 317 (IVLA…IIQV), and 346 to 366 (TVVI…LATL).

The protein belongs to the glycosyltransferase 4 family. MraY subfamily. Mg(2+) is required as a cofactor.

It is found in the cell inner membrane. The catalysed reaction is UDP-N-acetyl-alpha-D-muramoyl-L-alanyl-gamma-D-glutamyl-meso-2,6-diaminopimeloyl-D-alanyl-D-alanine + di-trans,octa-cis-undecaprenyl phosphate = di-trans,octa-cis-undecaprenyl diphospho-N-acetyl-alpha-D-muramoyl-L-alanyl-D-glutamyl-meso-2,6-diaminopimeloyl-D-alanyl-D-alanine + UMP. It participates in cell wall biogenesis; peptidoglycan biosynthesis. Its function is as follows. Catalyzes the initial step of the lipid cycle reactions in the biosynthesis of the cell wall peptidoglycan: transfers peptidoglycan precursor phospho-MurNAc-pentapeptide from UDP-MurNAc-pentapeptide onto the lipid carrier undecaprenyl phosphate, yielding undecaprenyl-pyrophosphoryl-MurNAc-pentapeptide, known as lipid I. The protein is Phospho-N-acetylmuramoyl-pentapeptide-transferase of Phenylobacterium zucineum (strain HLK1).